The chain runs to 338 residues: 1-aminocyclopropane-1-carboxylate deaminase (338 aa).

K51 is subject to N6-(pyridoxal phosphate)lysine. S78 serves as the catalytic Nucleophile.

It belongs to the ACC deaminase/D-cysteine desulfhydrase family. Homotrimer. It depends on pyridoxal 5'-phosphate as a cofactor.

The catalysed reaction is 1-aminocyclopropane-1-carboxylate + H2O = 2-oxobutanoate + NH4(+). Functionally, catalyzes a cyclopropane ring-opening reaction, the irreversible conversion of 1-aminocyclopropane-1-carboxylate (ACC) to ammonia and alpha-ketobutyrate. Allows growth on ACC as a nitrogen source. This chain is 1-aminocyclopropane-1-carboxylate deaminase, found in Pseudomonas sp. (strain ACP).